A 302-amino-acid chain; its full sequence is MAFQGHQARKRFGQHWLKDQTVLDRIVAAADLQPSDRVLEVGPGRGALTERLLSSPAAAVQAVELDRDLVDGLRERFAGDPRFSLRQGDVLELPLQLEDGVAASKVVANIPYNITGPLLDRLVGRLDRPVEPPYQRLVLLVQKQVAERIRARPGHSSFSALSVRMQLLARCTTVCPVPPRCFQPPPKVQSEVIQIDPLPADKRLPSDIARRVESLLRQAFLARRKMLRNTLASLAPEPQLQALAAAAGFQLHQRPQELAPQVWVALARGLNQGIDAASADGHDHGDGSGQGESSPGGARDQI.

S-adenosyl-L-methionine-binding residues include His15, Leu17, Gly42, Glu64, Asp89, and Asn109. The interval 275 to 302 is disordered; it reads DAASADGHDHGDGSGQGESSPGGARDQI.

The protein belongs to the class I-like SAM-binding methyltransferase superfamily. rRNA adenine N(6)-methyltransferase family. RsmA subfamily.

It localises to the cytoplasm. The catalysed reaction is adenosine(1518)/adenosine(1519) in 16S rRNA + 4 S-adenosyl-L-methionine = N(6)-dimethyladenosine(1518)/N(6)-dimethyladenosine(1519) in 16S rRNA + 4 S-adenosyl-L-homocysteine + 4 H(+). Functionally, specifically dimethylates two adjacent adenosines (A1518 and A1519) in the loop of a conserved hairpin near the 3'-end of 16S rRNA in the 30S particle. May play a critical role in biogenesis of 30S subunits. This is Ribosomal RNA small subunit methyltransferase A from Parasynechococcus marenigrum (strain WH8102).